Here is a 234-residue protein sequence, read N- to C-terminus: Small ribosomal subunit protein uS2 (234 aa).

The protein belongs to the universal ribosomal protein uS2 family.

The sequence is that of Small ribosomal subunit protein uS2 from Prochlorococcus marinus (strain AS9601).